A 122-amino-acid polypeptide reads, in one-letter code: Large ribosomal subunit protein bL12 (122 aa).

The protein belongs to the bacterial ribosomal protein bL12 family. In terms of assembly, homodimer. Part of the ribosomal stalk of the 50S ribosomal subunit. Forms a multimeric L10(L12)X complex, where L10 forms an elongated spine to which 2 to 4 L12 dimers bind in a sequential fashion. Binds GTP-bound translation factors.

Functionally, forms part of the ribosomal stalk which helps the ribosome interact with GTP-bound translation factors. Is thus essential for accurate translation. This chain is Large ribosomal subunit protein bL12, found in Staphylococcus haemolyticus (strain JCSC1435).